Consider the following 600-residue polypeptide: Aspartate--tRNA(Asp/Asn) ligase (600 aa).

Glu174 is an L-aspartate binding site. The tract at residues 198–201 (QLFK) is aspartate. Arg220 serves as a coordination point for L-aspartate. Residues 220–222 (RDE) and Gln229 contribute to the ATP site. His457 is an L-aspartate binding site. Residue Glu491 participates in ATP binding. Arg498 is an L-aspartate binding site. ATP is bound at residue 543-546 (GLDR).

The protein belongs to the class-II aminoacyl-tRNA synthetase family. Type 1 subfamily. As to quaternary structure, homodimer.

The protein resides in the cytoplasm. It catalyses the reaction tRNA(Asx) + L-aspartate + ATP = L-aspartyl-tRNA(Asx) + AMP + diphosphate. Its function is as follows. Aspartyl-tRNA synthetase with relaxed tRNA specificity since it is able to aspartylate not only its cognate tRNA(Asp) but also tRNA(Asn). Reaction proceeds in two steps: L-aspartate is first activated by ATP to form Asp-AMP and then transferred to the acceptor end of tRNA(Asp/Asn). The sequence is that of Aspartate--tRNA(Asp/Asn) ligase from Burkholderia cenocepacia (strain ATCC BAA-245 / DSM 16553 / LMG 16656 / NCTC 13227 / J2315 / CF5610) (Burkholderia cepacia (strain J2315)).